The following is a 418-amino-acid chain: Inward rectifier potassium channel 16 (418 aa).

Residues 1 to 67 lie on the Cytoplasmic side of the membrane; it reads MSYYGSSYHI…VVDIFTTLVD (67 aa). Residues 68–94 form a helical membrane-spanning segment; sequence TKWRHMFVIFSLSYILSWLIFGSVFWL. The Extracellular segment spans residues 95–117; it reads IAFHHGDLLNDPDITPCVDNVHS. An intramembrane region (helical; Pore-forming) is located at residues 118 to 134; the sequence is FTGAFLFSLETQTTIGY. The Selectivity filter signature appears at 131–136; the sequence is TIGYGY. Topologically, residues 135–143 are extracellular; sequence GYRCVTEEC. The chain crosses the membrane as a helical span at residues 144–171; sequence SVAVLMVILQSILSCIINTFIIGAALAK. The Cytoplasmic portion of the chain corresponds to 172 to 418; the sequence is MATARKRAQT…LNRISVESQM (247 aa). Phosphoserine occurs at positions 373 and 375.

This sequence belongs to the inward rectifier-type potassium channel (TC 1.A.2.1) family. KCNJ16 subfamily. As to quaternary structure, it forms heteromeric channels with Kir4.1/KCNJ10; this interaction is required for KCNJ16 localization to the basolateral membrane in kidney cells. As a heteromer with KCNJ10, may interact with MAGI1; this interaction may facilitate KCNJ10/KCNJ16 potassium channel expression at the basolateral membrane in kidney cells. May form heteromers with Kir2.1/KCNJ2. Can form heteromeric channels with Kir4.2/KCNJ15. In terms of tissue distribution, widely expressed, with highest levels in adult and fetal kidney (at protein level). In the kidney, expressed in the proximal and distal convoluted tubules, but not in glomeruli nor collecting ducts.

The protein localises to the membrane. The protein resides in the basolateral cell membrane. It carries out the reaction K(+)(in) = K(+)(out). With respect to regulation, channel activity is strongly regulated by variations of cytosolic pH; channels are activated by alkaline and inhibited by acidic pH values. Activated by phosphatidylinositol 4,5 biphosphate (PtdIns(4,5)P2). Functionally, inward rectifier potassium channels are characterized by a greater tendency to allow potassium to flow into the cell rather than out of it. Their voltage dependence is regulated by the concentration of extracellular potassium; as external potassium is raised, the voltage range of the channel opening shifts to more positive voltages. The inward rectification is mainly due to the blockage of outward current by internal magnesium. KCNJ16 may be involved in the regulation of fluid and pH balance. In the kidney, together with KCNJ10, mediates basolateral K(+) recycling in distal tubules; this process is critical for Na(+) reabsorption at the tubules. The polypeptide is Inward rectifier potassium channel 16 (KCNJ16) (Homo sapiens (Human)).